Here is a 136-residue protein sequence, read N- to C-terminus: Small ribosomal subunit protein eS19 (136 aa).

An N6-acetyllysine modification is found at Lys-23. Residue Arg-67 is modified to Omega-N-methylarginine. Lys-111 and Lys-115 each carry N6-acetyllysine. Positions 116–136 (DQDGGRKLTPQGQRDLDRIAG) are disordered.

This sequence belongs to the eukaryotic ribosomal protein eS19 family. As to quaternary structure, component of the small ribosomal subunit. Part of the small subunit (SSU) processome, composed of more than 70 proteins and the RNA chaperone small nucleolar RNA (snoRNA) U3. Interacts with RPS19BP1; the interaction is direct and mediates the integration of RPS19 in state post-A1. Interacts with RPS19BP1.

The protein resides in the cytoplasm. Its subcellular location is the nucleus. It localises to the nucleolus. In terms of biological role, component of the small ribosomal subunit. The ribosome is a large ribonucleoprotein complex responsible for the synthesis of proteins in the cell. Required for pre-rRNA processing and maturation of 40S ribosomal subunits. Part of the small subunit (SSU) processome, first precursor of the small eukaryotic ribosomal subunit. During the assembly of the SSU processome in the nucleolus, many ribosome biogenesis factors, an RNA chaperone and ribosomal proteins associate with the nascent pre-rRNA and work in concert to generate RNA folding, modifications, rearrangements and cleavage as well as targeted degradation of pre-ribosomal RNA by the RNA exosome. This Sus scrofa (Pig) protein is Small ribosomal subunit protein eS19 (RPS19).